A 158-amino-acid polypeptide reads, in one-letter code: D-aminoacyl-tRNA deacylase (158 aa).

The short motif at 143–144 (GP) is the Gly-cisPro motif, important for rejection of L-amino acids element.

It belongs to the DTD family. Homodimer.

The protein resides in the cytoplasm. It carries out the reaction glycyl-tRNA(Ala) + H2O = tRNA(Ala) + glycine + H(+). The catalysed reaction is a D-aminoacyl-tRNA + H2O = a tRNA + a D-alpha-amino acid + H(+). Functionally, an aminoacyl-tRNA editing enzyme that deacylates mischarged D-aminoacyl-tRNAs. Also deacylates mischarged glycyl-tRNA(Ala), protecting cells against glycine mischarging by AlaRS. Acts via tRNA-based rather than protein-based catalysis; rejects L-amino acids rather than detecting D-amino acids in the active site. By recycling D-aminoacyl-tRNA to D-amino acids and free tRNA molecules, this enzyme counteracts the toxicity associated with the formation of D-aminoacyl-tRNA entities in vivo and helps enforce protein L-homochirality. In Solidesulfovibrio magneticus (strain ATCC 700980 / DSM 13731 / RS-1) (Desulfovibrio magneticus), this protein is D-aminoacyl-tRNA deacylase.